The sequence spans 429 residues: Trigger factor (429 aa).

In terms of domain architecture, PPIase FKBP-type spans G164–P249.

The protein belongs to the FKBP-type PPIase family. Tig subfamily.

The protein localises to the cytoplasm. The enzyme catalyses [protein]-peptidylproline (omega=180) = [protein]-peptidylproline (omega=0). In terms of biological role, involved in protein export. Acts as a chaperone by maintaining the newly synthesized protein in an open conformation. Functions as a peptidyl-prolyl cis-trans isomerase. The protein is Trigger factor of Lysinibacillus sphaericus (strain C3-41).